Reading from the N-terminus, the 37-residue chain is Large ribosomal subunit protein bL36 (37 aa).

This sequence belongs to the bacterial ribosomal protein bL36 family.

The sequence is that of Large ribosomal subunit protein bL36 from Streptomyces avermitilis (strain ATCC 31267 / DSM 46492 / JCM 5070 / NBRC 14893 / NCIMB 12804 / NRRL 8165 / MA-4680).